A 344-amino-acid chain; its full sequence is Protein L-Myc-1-B (344 aa).

Polar residues-rich tracts occupy residues 104 to 113 and 213 to 223; these read GSPRVTNTQK and NTMSPQHNFHS. Disordered stretches follow at residues 104–162 and 208–271; these read GSPR…EDEI and LPPE…YLER. A compositionally biased stretch (basic and acidic residues) spans 259–270; sequence DLAKRKNHNYLE. A bHLH domain is found at 261–313; that stretch reads AKRKNHNYLERKRRNDLRSRFLALREEVPSLSRSTKTPKVVVLSKATEFLKGL. Positions 313–341 are leucine-zipper; the sequence is LVIQEQQLTAEKLKLWSRHQQLLRRISQL.

As to quaternary structure, efficient DNA binding requires dimerization with another bHLH protein. Binds DNA as a heterodimer with MAX. In terms of tissue distribution, high levels in oocytes, modest levels in kidney and low levels in spleen.

It localises to the nucleus. The protein is Protein L-Myc-1-B (mycl1-b) of Xenopus laevis (African clawed frog).